The following is a 729-amino-acid chain: Probable cyclic di-GMP phosphodiesterase PdeA (729 aa).

8 consecutive transmembrane segments (helical) span residues 17-37 (AFTLTVVLIQLSRFISPLAII), 41-61 (YIFLAWMPLCVMLSILFIFGW), 83-103 (FLQTAVMLGSQTFVVLCACAI), 126-146 (FWLGLVTPIGIKCSMYLVGSF), 163-183 (IFTVVDLLSLFTAVLIYNMLF), 214-234 (AFTLSWLAALSVLLLLLCTPY), 238-258 (FIAGYLVPVFFIIFTLGVGKL), and 289-309 (YSLAFILAVLISFSVCLLYMV). The 129-residue stretch at 348 to 476 (AGKSFCCLRI…AHHHVLALDS (129 aa)) folds into the GGDEF domain. Positions 488–729 (QVLLLNTIRT…LIGRPQPLAD (242 aa)) constitute an EAL domain.

Its subcellular location is the cell membrane. The enzyme catalyses 3',3'-c-di-GMP + H2O = 5'-phosphoguanylyl(3'-&gt;5')guanosine + H(+). Functionally, phosphodiesterase (PDE) that catalyzes the hydrolysis of cyclic-di-GMP (c-di-GMP) to 5'-pGpG. The sequence is that of Probable cyclic di-GMP phosphodiesterase PdeA from Escherichia coli (strain K12).